The primary structure comprises 535 residues: WD repeat-containing protein 25 (535 aa).

Disordered regions lie at residues 1–108 and 141–160; these read MASL…PRPS and DQSTFESTAGNASSSQRKRG. Over residues 141-155 the composition is skewed to polar residues; that stretch reads DQSTFESTAGNASSS. WD repeat units lie at residues 235 to 277, 281 to 320, 321 to 362, 365 to 411, 415 to 454, 460 to 501, and 504 to 535; these read GHRG…HCLQ, VHSEAVRAARWSPCGRRILSGGFDFALHLTDLETGTQVFS, GQSD…VVKG, ATIQ…KISN, HERYTCPSLALHPREPVFLAQTNGNYLALFSSVWPYRMSR, GHKV…RACT, and GHTQACLGTTYHPVLPSVLGTCSWGGDIKIWH.

The polypeptide is WD repeat-containing protein 25 (Wdr25) (Mus musculus (Mouse)).